A 229-amino-acid polypeptide reads, in one-letter code: MKLVLIRHGQSEWNKLNLFTGWHDVDLSEEGVVEAMTAGKRIKEAGLEFDVAFTSVLTRAIKTLNYVLEESDQMWVPVNKSWRLNERHYGALQGLNKQETAEKYGADQVQKWRRSYDTLPPLLEENDERQAKNDRRYQLLDTHAIPSGENLKVTLERVIPYWMDTIAPEIKEGRRVVIAAHGNSLRALVKFLEGISDDEIMELEIPTGVPLVYELNDDLKPVNKYYLDK.

Substrate is bound by residues 7–14 (RHGQSEWN), 20–21 (TG), arginine 59, 86–89 (ERHY), lysine 97, 113–114 (RR), and 182–183 (GN). The Tele-phosphohistidine intermediate role is filled by histidine 8. The Proton donor/acceptor role is filled by glutamate 86.

This sequence belongs to the phosphoglycerate mutase family. BPG-dependent PGAM subfamily.

It carries out the reaction (2R)-2-phosphoglycerate = (2R)-3-phosphoglycerate. Its pathway is carbohydrate degradation; glycolysis; pyruvate from D-glyceraldehyde 3-phosphate: step 3/5. Catalyzes the interconversion of 2-phosphoglycerate and 3-phosphoglycerate. This chain is 2,3-bisphosphoglycerate-dependent phosphoglycerate mutase, found in Listeria welshimeri serovar 6b (strain ATCC 35897 / DSM 20650 / CCUG 15529 / CIP 8149 / NCTC 11857 / SLCC 5334 / V8).